Here is an 859-residue protein sequence, read N- to C-terminus: Cadherin-related family member 1 (859 aa).

Positions Met1–Ala21 are cleaved as a signal peptide. Residues Asn22–Lys701 are Extracellular-facing. Cadherin domains lie at Asn36–Phe135, Leu136–Phe247, Val248–Phe354, Pro360–Phe473, Thr474–Phe577, and Asp569–Phe691. N-linked (GlcNAc...) asparagine glycosylation is found at Asn58 and Asn89. Residues Asn288 and Asn297 are each glycosylated (N-linked (GlcNAc...) asparagine). The chain crosses the membrane as a helical span at residues Ala702–Thr722. Residues Ala723–Val859 lie on the Cytoplasmic side of the membrane. A disordered region spans residues Pro789–Val859. The segment covering Pro790–Lys800 has biased composition (pro residues). The segment covering Ala802–Gly816 has biased composition (polar residues). Residues Ser817–Pro827 are compositionally biased toward low complexity.

Interacts with PROM1. Post-translationally, undergoes proteolytic cleavage; produces a soluble 95 kDa N-terminal fragment and a 25 kDa cell-associated C-terminal fragment. As to expression, expressed in the retina. Strongly expressed by the mitral and tufted cells in the main and accessory olfactory bulbs. Also expressed in the septum and olfactory cortex. Weakly expressed in the triangular septal nucleus and piriform cortex.

Its subcellular location is the cell membrane. Potential calcium-dependent cell-adhesion protein. May be required for the structural integrity of the outer segment (OS) of photoreceptor cells. The polypeptide is Cadherin-related family member 1 (Cdhr1) (Rattus norvegicus (Rat)).